The primary structure comprises 578 residues: MNISVDLETNYAELVLDVGRVTLGENSRKKMKDCKLRKKQNESVSRAMCALLNSGGGVIKAEIENEDYSYTKDGIGLDLENSFSNILLFVPEYLDFMQNGNYFLIFVKSWSLNTSGLRITTLSSNLYKRDITSAKVMNATAALEFLKDMKKTRGRLYLRPELLAKRPCVDIQEENNMKALAGVFFDRTELDRKEKLTFTESTHVEIKNFSTEKLLQRIKEILPQYVSAFANTDGGYLFIGLNEDKEIIGFKAEMSDLDDLEREIEKSIRKMPVHHFCMEKKKINYSCKFLGVYDKGSLCGYVCALRVERFCCAVFAKEPDSWHVKDNRVMQLTRKEWIQFMVEAEPKFSSSYEEVISQINTSLPAPHSWPLLEWQRQRHHCPGLSGRITYTPENLCRKLFLQHEGLKQLICEEMDSVRKGSLIFSRSWSVDLGLQENHKVLCDALLISQDSPPVLYTFHMVQDEEFKGYSTQTALTLKQKLAKIGGYTKKVCVMTKIFYLSPEGMTSCQYDLRSQVIYPESYYFTRRKYLLKALFKALKRLKSLRDQFSFAENLYQIIGIDCFQKNDKKMFKSCRRLT.

Phosphoserine is present on Ser368. The mediates interaction with PDE3A stretch occupies residues 551-560 (AENLYQIIGI). Residue Ser573 is modified to Phosphoserine.

The protein belongs to the Schlafen family. Subgroup II subfamily. As to quaternary structure, homodimer. Interacts with PDE3A; direct low affinity interaction which is stimulated by binding of 17beta-estradiol/E2 to PDE3A and that positively regulates the ribonuclease activity of SLFN12. Interacts with SERPINB12; as part of a pathway regulating cell differentiation. Post-translationally, phosphorylation at Ser-368 and Ser-573 negatively regulates the ribonuclease activity. Dephosphorylation is induced by the interaction with PDE3A and stimulates the rRNA ribonuclease activity.

Its subcellular location is the nucleus. The protein resides in the cytoplasm. The protein localises to the cytosol. In terms of biological role, ribonuclease which is part of an E2/17beta-estradiol-induced pro-apoptotic signaling pathway. E2 stabilizes the PDE3A/SLFN12 complex in the cytosol, promoting the dephosphorylation of SLFN12 and activating its pro-apoptotic ribosomal RNA/rRNA ribonuclease activity. This apoptotic pathway might be relevant in tissues with high concentration of E2 and be for instance involved in placenta remodeling. May play a role in cell differentiation. The polypeptide is Ribonuclease SLFN12 (Homo sapiens (Human)).